Reading from the N-terminus, the 148-residue chain is Large ribosomal subunit protein bL9 (148 aa).

The protein belongs to the bacterial ribosomal protein bL9 family.

Functionally, binds to the 23S rRNA. This is Large ribosomal subunit protein bL9 from Hydrogenobaculum sp. (strain Y04AAS1).